A 320-amino-acid chain; its full sequence is Thymidylate synthase (320 aa).

Residues arginine 27 and arginine 182 to arginine 183 contribute to the dUMP site. The active-site Nucleophile is the cysteine 202. DUMP contacts are provided by residues arginine 222–aspartate 225, asparagine 233, and histidine 263–tyrosine 265. Aspartate 225 is a (6R)-5,10-methylene-5,6,7,8-tetrahydrofolate binding site. Alanine 319 contacts (6R)-5,10-methylene-5,6,7,8-tetrahydrofolate.

This sequence belongs to the thymidylate synthase family. Bacterial-type ThyA subfamily. Homodimer.

It localises to the cytoplasm. It catalyses the reaction dUMP + (6R)-5,10-methylene-5,6,7,8-tetrahydrofolate = 7,8-dihydrofolate + dTMP. It participates in pyrimidine metabolism; dTTP biosynthesis. Catalyzes the reductive methylation of 2'-deoxyuridine-5'-monophosphate (dUMP) to 2'-deoxythymidine-5'-monophosphate (dTMP) while utilizing 5,10-methylenetetrahydrofolate (mTHF) as the methyl donor and reductant in the reaction, yielding dihydrofolate (DHF) as a by-product. This enzymatic reaction provides an intracellular de novo source of dTMP, an essential precursor for DNA biosynthesis. This chain is Thymidylate synthase, found in Limosilactobacillus reuteri (strain DSM 20016) (Lactobacillus reuteri).